We begin with the raw amino-acid sequence, 360 residues long: Peptide chain release factor 1 (360 aa).

At Q236 the chain carries N5-methylglutamine.

Belongs to the prokaryotic/mitochondrial release factor family. Post-translationally, methylated by PrmC. Methylation increases the termination efficiency of RF1.

It localises to the cytoplasm. Peptide chain release factor 1 directs the termination of translation in response to the peptide chain termination codons UAG and UAA. In Limosilactobacillus reuteri subsp. reuteri (strain JCM 1112) (Lactobacillus reuteri), this protein is Peptide chain release factor 1.